Reading from the N-terminus, the 921-residue chain is Isoleucine--tRNA ligase 1 (921 aa).

A 'HIGH' region motif is present at residues 57 to 67; the sequence is PYANGDIHMGH. Glutamate 552 serves as a coordination point for L-isoleucyl-5'-AMP. Residues 593–597 carry the 'KMSKS' region motif; that stretch reads KMSKS. Lysine 596 is an ATP binding site. Cysteine 888, cysteine 891, cysteine 908, and cysteine 911 together coordinate Zn(2+).

Belongs to the class-I aminoacyl-tRNA synthetase family. IleS type 1 subfamily. Monomer. The cofactor is Zn(2+).

Its subcellular location is the cytoplasm. It catalyses the reaction tRNA(Ile) + L-isoleucine + ATP = L-isoleucyl-tRNA(Ile) + AMP + diphosphate. Its function is as follows. Catalyzes the attachment of isoleucine to tRNA(Ile). As IleRS can inadvertently accommodate and process structurally similar amino acids such as valine, to avoid such errors it has two additional distinct tRNA(Ile)-dependent editing activities. One activity is designated as 'pretransfer' editing and involves the hydrolysis of activated Val-AMP. The other activity is designated 'posttransfer' editing and involves deacylation of mischarged Val-tRNA(Ile). The chain is Isoleucine--tRNA ligase 1 from Bacillus thuringiensis subsp. konkukian (strain 97-27).